We begin with the raw amino-acid sequence, 260 residues long: GTP cyclohydrolase FolE2 (260 aa).

It belongs to the GTP cyclohydrolase IV family.

It catalyses the reaction GTP + H2O = 7,8-dihydroneopterin 3'-triphosphate + formate + H(+). Its pathway is cofactor biosynthesis; 7,8-dihydroneopterin triphosphate biosynthesis; 7,8-dihydroneopterin triphosphate from GTP: step 1/1. Its function is as follows. Converts GTP to 7,8-dihydroneopterin triphosphate. This is GTP cyclohydrolase FolE2 from Desulfovibrio desulfuricans (strain ATCC 27774 / DSM 6949 / MB).